The sequence spans 452 residues: Bifunctional protein GlmU (452 aa).

Residues 1–232 (MTGRSCLTIV…EDEVRGINTK (232 aa)) are pyrophosphorylase. Residues 11–14 (LAAG), lysine 25, glutamine 78, and 83–84 (GT) each bind UDP-N-acetyl-alpha-D-glucosamine. Position 108 (aspartate 108) interacts with Mg(2+). 4 residues coordinate UDP-N-acetyl-alpha-D-glucosamine: glycine 144, glutamate 158, asparagine 173, and asparagine 230. Asparagine 230 serves as a coordination point for Mg(2+). Residues 233-253 (AQLAEAEQVMQARLRKEALDA) form a linker region. Positions 254 to 452 (GVTMVAPDTV…KLLAKKPKTG (199 aa)) are N-acetyltransferase. Positions 319 and 337 each coordinate UDP-N-acetyl-alpha-D-glucosamine. Histidine 349 functions as the Proton acceptor in the catalytic mechanism. Residues tyrosine 352 and asparagine 363 each contribute to the UDP-N-acetyl-alpha-D-glucosamine site. Residues alanine 366, 372-373 (NY), serine 391, serine 409, and arginine 426 each bind acetyl-CoA.

The protein in the N-terminal section; belongs to the N-acetylglucosamine-1-phosphate uridyltransferase family. This sequence in the C-terminal section; belongs to the transferase hexapeptide repeat family. Homotrimer. The cofactor is Mg(2+).

Its subcellular location is the cytoplasm. The catalysed reaction is alpha-D-glucosamine 1-phosphate + acetyl-CoA = N-acetyl-alpha-D-glucosamine 1-phosphate + CoA + H(+). The enzyme catalyses N-acetyl-alpha-D-glucosamine 1-phosphate + UTP + H(+) = UDP-N-acetyl-alpha-D-glucosamine + diphosphate. The protein operates within nucleotide-sugar biosynthesis; UDP-N-acetyl-alpha-D-glucosamine biosynthesis; N-acetyl-alpha-D-glucosamine 1-phosphate from alpha-D-glucosamine 6-phosphate (route II): step 2/2. It functions in the pathway nucleotide-sugar biosynthesis; UDP-N-acetyl-alpha-D-glucosamine biosynthesis; UDP-N-acetyl-alpha-D-glucosamine from N-acetyl-alpha-D-glucosamine 1-phosphate: step 1/1. Its pathway is bacterial outer membrane biogenesis; LPS lipid A biosynthesis. Functionally, catalyzes the last two sequential reactions in the de novo biosynthetic pathway for UDP-N-acetylglucosamine (UDP-GlcNAc). The C-terminal domain catalyzes the transfer of acetyl group from acetyl coenzyme A to glucosamine-1-phosphate (GlcN-1-P) to produce N-acetylglucosamine-1-phosphate (GlcNAc-1-P), which is converted into UDP-GlcNAc by the transfer of uridine 5-monophosphate (from uridine 5-triphosphate), a reaction catalyzed by the N-terminal domain. In Nitrobacter hamburgensis (strain DSM 10229 / NCIMB 13809 / X14), this protein is Bifunctional protein GlmU.